The sequence spans 1159 residues: ATP-dependent helicase/deoxyribonuclease subunit B (1159 aa).

An ATP-binding site is contributed by 8 to 15; that stretch reads GRAGSGKT. Cys-784, Cys-1102, Cys-1105, and Cys-1111 together coordinate [4Fe-4S] cluster. The tract at residues 1140 to 1159 is disordered; it reads VKEDGSQVDGRTEGSDNNEG.

This sequence belongs to the helicase family. AddB/RexB type 1 subfamily. Heterodimer of AddA and AddB. Requires Mg(2+) as cofactor. The cofactor is [4Fe-4S] cluster.

In terms of biological role, the heterodimer acts as both an ATP-dependent DNA helicase and an ATP-dependent, dual-direction single-stranded exonuclease. Recognizes the chi site generating a DNA molecule suitable for the initiation of homologous recombination. The AddB subunit has 5' -&gt; 3' nuclease activity but not helicase activity. In Caldanaerobacter subterraneus subsp. tengcongensis (strain DSM 15242 / JCM 11007 / NBRC 100824 / MB4) (Thermoanaerobacter tengcongensis), this protein is ATP-dependent helicase/deoxyribonuclease subunit B.